A 507-amino-acid chain; its full sequence is ATP synthase subunit alpha, chloroplastic (507 aa).

170-177 (GDRQTGKT) is an ATP binding site.

This sequence belongs to the ATPase alpha/beta chains family. In terms of assembly, F-type ATPases have 2 components, CF(1) - the catalytic core - and CF(0) - the membrane proton channel. CF(1) has five subunits: alpha(3), beta(3), gamma(1), delta(1), epsilon(1). CF(0) has four main subunits: a, b, b' and c.

It is found in the plastid. Its subcellular location is the chloroplast thylakoid membrane. The catalysed reaction is ATP + H2O + 4 H(+)(in) = ADP + phosphate + 5 H(+)(out). Produces ATP from ADP in the presence of a proton gradient across the membrane. The alpha chain is a regulatory subunit. The chain is ATP synthase subunit alpha, chloroplastic from Oenothera glazioviana (Large-flowered evening primrose).